The primary structure comprises 487 residues: Glutamyl-tRNA(Gln) amidotransferase subunit A (487 aa).

Catalysis depends on charge relay system residues K77 and S152. S176 (acyl-ester intermediate) is an active-site residue.

Belongs to the amidase family. GatA subfamily. As to quaternary structure, heterotrimer of A, B and C subunits.

The enzyme catalyses L-glutamyl-tRNA(Gln) + L-glutamine + ATP + H2O = L-glutaminyl-tRNA(Gln) + L-glutamate + ADP + phosphate + H(+). In terms of biological role, allows the formation of correctly charged Gln-tRNA(Gln) through the transamidation of misacylated Glu-tRNA(Gln) in organisms which lack glutaminyl-tRNA synthetase. The reaction takes place in the presence of glutamine and ATP through an activated gamma-phospho-Glu-tRNA(Gln). The protein is Glutamyl-tRNA(Gln) amidotransferase subunit A of Lysinibacillus sphaericus (strain C3-41).